A 261-amino-acid chain; its full sequence is Pimeloyl-[acyl-carrier protein] methyl ester esterase (261 aa).

The 226-residue stretch at 16–241 (LVLLHGWGLN…HAAHAPFISH (226 aa)) folds into the AB hydrolase-1 domain. Residues Trp22, 82-83 (SL), and 143-147 (FLALQ) each bind substrate. Ser82 serves as the catalytic Nucleophile. Catalysis depends on residues Asp207 and His235. Residue His235 coordinates substrate.

It belongs to the AB hydrolase superfamily. Carboxylesterase BioH family. In terms of assembly, monomer.

Its subcellular location is the cytoplasm. It catalyses the reaction 6-carboxyhexanoyl-[ACP] methyl ester + H2O = 6-carboxyhexanoyl-[ACP] + methanol + H(+). The protein operates within cofactor biosynthesis; biotin biosynthesis. Functionally, the physiological role of BioH is to remove the methyl group introduced by BioC when the pimeloyl moiety is complete. It allows to synthesize pimeloyl-ACP via the fatty acid synthetic pathway through the hydrolysis of the ester bonds of pimeloyl-ACP esters. In Photorhabdus laumondii subsp. laumondii (strain DSM 15139 / CIP 105565 / TT01) (Photorhabdus luminescens subsp. laumondii), this protein is Pimeloyl-[acyl-carrier protein] methyl ester esterase.